The following is a 332-amino-acid chain: Biotin synthase (332 aa).

A Radical SAM core domain is found at 53–282 (HFGKKVKLNM…TKEIRISGGR (230 aa)). The [4Fe-4S] cluster site is built by cysteine 71, cysteine 75, and cysteine 78. [2Fe-2S] cluster is bound by residues cysteine 115, cysteine 147, cysteine 207, and arginine 277.

It belongs to the radical SAM superfamily. Biotin synthase family. Homodimer. [4Fe-4S] cluster serves as cofactor. [2Fe-2S] cluster is required as a cofactor.

It carries out the reaction (4R,5S)-dethiobiotin + (sulfur carrier)-SH + 2 reduced [2Fe-2S]-[ferredoxin] + 2 S-adenosyl-L-methionine = (sulfur carrier)-H + biotin + 2 5'-deoxyadenosine + 2 L-methionine + 2 oxidized [2Fe-2S]-[ferredoxin]. It participates in cofactor biosynthesis; biotin biosynthesis; biotin from 7,8-diaminononanoate: step 2/2. In terms of biological role, catalyzes the conversion of dethiobiotin (DTB) to biotin by the insertion of a sulfur atom into dethiobiotin via a radical-based mechanism. The polypeptide is Biotin synthase (Bacillus cereus (strain B4264)).